A 291-amino-acid polypeptide reads, in one-letter code: Probable alpha-L-glutamate ligase (291 aa).

One can recognise an ATP-grasp domain in the interval 104–287 (HQLLASQGID…VAGTIIQHLE (184 aa)). ATP contacts are provided by residues lysine 141, 178-179 (EF), aspartate 187, and 211-213 (RSN). Aspartate 248, glutamate 260, and asparagine 262 together coordinate Mg(2+). Mn(2+) is bound by residues aspartate 248, glutamate 260, and asparagine 262.

Belongs to the RimK family. Mg(2+) serves as cofactor. It depends on Mn(2+) as a cofactor.

This Xanthomonas campestris pv. campestris (strain B100) protein is Probable alpha-L-glutamate ligase.